The chain runs to 415 residues: Gamma-glutamyl phosphate reductase (415 aa).

This sequence belongs to the gamma-glutamyl phosphate reductase family.

Its subcellular location is the cytoplasm. It carries out the reaction L-glutamate 5-semialdehyde + phosphate + NADP(+) = L-glutamyl 5-phosphate + NADPH + H(+). It functions in the pathway amino-acid biosynthesis; L-proline biosynthesis; L-glutamate 5-semialdehyde from L-glutamate: step 2/2. Functionally, catalyzes the NADPH-dependent reduction of L-glutamate 5-phosphate into L-glutamate 5-semialdehyde and phosphate. The product spontaneously undergoes cyclization to form 1-pyrroline-5-carboxylate. The chain is Gamma-glutamyl phosphate reductase from Bacillus cereus (strain ATCC 10987 / NRS 248).